Reading from the N-terminus, the 725-residue chain is Beta-adducin (725 aa).

A disordered region spans residues 1–22 (MSEDTVPEAASPPPSQGQHYFD). Phosphoserine occurs at positions 11 and 25. Threonine 55 carries the phosphothreonine modification. 2 positions are modified to phosphoserine: serine 60 and serine 344. The tract at residues 425 to 444 (KQQKEKTRWLNTPNTYLRVN) is interaction with calmodulin. The segment at 525–725 (AEKSRSPSTE…KSKKKEKVES (201 aa)) is disordered. Serine 530 and serine 532 each carry phosphoserine. At threonine 533 the chain carries Phosphothreonine. Serine 535 is subject to Phosphoserine. At threonine 561 the chain carries Phosphothreonine. A compositionally biased stretch (basic and acidic residues) spans 566–588 (EEYKKEVERKKLEQEQEGEKDAA). 4 positions are modified to phosphoserine: serine 594, serine 598, serine 602, and serine 606. Residues 596 to 621 (VKSTPASPVQSPTRAGTKSPAVSPSK) are compositionally biased toward polar residues. Threonine 612 is modified (phosphothreonine). Serine 614, serine 618, and serine 620 each carry phosphoserine. Basic and acidic residues-rich tracts occupy residues 622-631 (ASEDAKKTEV) and 639-654 (EPEK…KEEE). Position 674 is a phosphothreonine (threonine 674). A phosphoserine mark is found at serine 678, serine 685, serine 688, serine 692, serine 696, serine 698, serine 700, serine 702, and serine 712. The segment covering 687 to 700 (TSGPLSPEGSPSKS) has biased composition (low complexity). Residues 701–725 (PSKKKKKFRTPSFLKKSKKKEKVES) are compositionally biased toward basic residues. An interaction with calmodulin region spans residues 703 to 720 (KKKKKFRTPSFLKKSKKK).

The protein belongs to the aldolase class II family. Adducin subfamily. In terms of assembly, heterodimer of an alpha and a beta subunit. Found in a complex with ADD2, DMTN and SLC2A1. Interacts with SLC2A1. As to expression, found in liver, kidney, spleen, heart and brain.

Its subcellular location is the cytoplasm. It localises to the cytoskeleton. The protein localises to the cell membrane. In terms of biological role, membrane-cytoskeleton-associated protein that promotes the assembly of the spectrin-actin network. Binds to the erythrocyte membrane receptor SLC2A1/GLUT1 and may therefore provide a link between the spectrin cytoskeleton to the plasma membrane. Binds to calmodulin. Calmodulin binds preferentially to the beta subunit. This Rattus norvegicus (Rat) protein is Beta-adducin (Add2).